The sequence spans 68 residues: MAFLKKSLFLVLFLGLVSLSVCEEEKRENEEEKNEQEEDDREERNEEKRLLGMIPLAISAISSLSKLG.

Residues 1-22 (MAFLKKSLFLVLFLGLVSLSVC) form the signal peptide. Residues 23–48 (EEEKRENEEEKNEQEEDDREERNEEK) constitute a propeptide that is removed on maturation. The disordered stretch occupies residues 25–47 (EKRENEEEKNEQEEDDREERNEE). The segment covering 31-41 (EEKNEQEEDDR) has biased composition (acidic residues). The residue at position 67 (leucine 67) is a Leucine amide.

Belongs to the frog skin active peptide (FSAP) family. Medusin subfamily. In terms of tissue distribution, expressed by the skin glands.

Its subcellular location is the secreted. Its function is as follows. Antimicrobial peptide with activity against Gram-positive bacteria (S.aureus, MIC=32 mg/L) and fungi (C.albicans, MIC=64 mg/L). Shows weak hemolytic activity. This is Medusin-DA1 from Agalychnis dacnicolor (Giant Mexican leaf frog).